The sequence spans 186 residues: MELNEIYEYARDHMQKSLDVLKKDFNTLRTGRVTTAVVENIKVDYYGAPTPLNQAASVVAADATTIVISPWDKSLLGEIERAIQEANIGVNPNNDGDQIKLFFPPMTVEQREAEAKKAKQFGEKAKIAIRNVRRDANDKIKKLFKDKAITEDEEKRGLEEVQKITDEFIKKVDDLVKQKEQEIMKV.

The protein belongs to the RRF family.

The protein localises to the cytoplasm. Functionally, responsible for the release of ribosomes from messenger RNA at the termination of protein biosynthesis. May increase the efficiency of translation by recycling ribosomes from one round of translation to another. In Nitratiruptor sp. (strain SB155-2), this protein is Ribosome-recycling factor.